The following is a 284-amino-acid chain: NAD kinase (284 aa).

Catalysis depends on Asp61, which acts as the Proton acceptor. NAD(+) contacts are provided by residues 61-62 (DG), Arg66, 136-137 (ND), Arg147, Lys164, Asp166, and Leu201.

Belongs to the NAD kinase family. The cofactor is a divalent metal cation.

It is found in the cytoplasm. The catalysed reaction is NAD(+) + ATP = ADP + NADP(+) + H(+). In terms of biological role, involved in the regulation of the intracellular balance of NAD and NADP, and is a key enzyme in the biosynthesis of NADP. Catalyzes specifically the phosphorylation on 2'-hydroxyl of the adenosine moiety of NAD to yield NADP. In Dehalococcoides mccartyi (strain ATCC BAA-2100 / JCM 16839 / KCTC 5957 / BAV1), this protein is NAD kinase.